Here is a 95-residue protein sequence, read N- to C-terminus: Aspartyl/glutamyl-tRNA(Asn/Gln) amidotransferase subunit C (95 aa).

Basic and acidic residues predominate over residues 55–67 (ALERRNVTREDQV). The disordered stretch occupies residues 55–83 (ALERRNVTREDQVHNSLTNDKALENAPET).

Belongs to the GatC family. As to quaternary structure, heterotrimer of A, B and C subunits.

It catalyses the reaction L-glutamyl-tRNA(Gln) + L-glutamine + ATP + H2O = L-glutaminyl-tRNA(Gln) + L-glutamate + ADP + phosphate + H(+). It carries out the reaction L-aspartyl-tRNA(Asn) + L-glutamine + ATP + H2O = L-asparaginyl-tRNA(Asn) + L-glutamate + ADP + phosphate + 2 H(+). Functionally, allows the formation of correctly charged Asn-tRNA(Asn) or Gln-tRNA(Gln) through the transamidation of misacylated Asp-tRNA(Asn) or Glu-tRNA(Gln) in organisms which lack either or both of asparaginyl-tRNA or glutaminyl-tRNA synthetases. The reaction takes place in the presence of glutamine and ATP through an activated phospho-Asp-tRNA(Asn) or phospho-Glu-tRNA(Gln). In Natranaerobius thermophilus (strain ATCC BAA-1301 / DSM 18059 / JW/NM-WN-LF), this protein is Aspartyl/glutamyl-tRNA(Asn/Gln) amidotransferase subunit C.